The sequence spans 364 residues: MKKNLMLIFGGVSFEHEISLRSAYGIYSSLLKLDKYNVFSIFVDKVTGIWYLLDSVPSSAELIKRHTTSIVNFIPGCGIFVNNKSLEIDVIFPIIHGRTGEDGAIQGFVKMMDIPCVGAGILGSAISINKYFCKVLLKSFNIPVVSFIGFKKDDYILNKEGIKEDINNKLNYPVIVKPSVLGSSIGINVAYNVSQIEKYIEEAFEYDLTVVVEKFIKAREIECAVIGNDQIKIFTPGEIVVQDFIFYDYDAKYSTVPGDSIVFNIPAHLDMKHLLDIKEYAFLTYKYLELRGMARIDFLISKDTNLLYVNEVNTIPGFTDISMFAKMCEHDGLSYESLVDKLITLAFESYKKRKDKIDFTRLES.

An ATP-grasp domain is found at 134-344 (KVLLKSFNIP…YESLVDKLIT (211 aa)). 167 to 222 (NNKLNYPVIVKPSVLGSSIGINVAYNVSQIEKYIEEAFEYDLTVVVEKFIKAREIE) contributes to the ATP binding site. Asp-297, Glu-311, and Asn-313 together coordinate Mg(2+).

The protein belongs to the D-alanine--D-alanine ligase family. The cofactor is Mg(2+). Mn(2+) is required as a cofactor.

It is found in the cytoplasm. The catalysed reaction is 2 D-alanine + ATP = D-alanyl-D-alanine + ADP + phosphate + H(+). It functions in the pathway cell wall biogenesis; peptidoglycan biosynthesis. Cell wall formation. This chain is D-alanine--D-alanine ligase, found in Borrelia recurrentis (strain A1).